A 124-amino-acid chain; its full sequence is UPF0102 protein BL0935 (124 aa).

Belongs to the UPF0102 family.

The chain is UPF0102 protein BL0935 from Bifidobacterium longum (strain NCC 2705).